Reading from the N-terminus, the 130-residue chain is Small ribosomal subunit protein uS9 (130 aa).

The segment at 109–130 (RMKERKKYGLKAARRAPQFSKR) is disordered. The segment covering 111-130 (KERKKYGLKAARRAPQFSKR) has biased composition (basic residues).

The protein belongs to the universal ribosomal protein uS9 family.

This chain is Small ribosomal subunit protein uS9, found in Lachnoclostridium phytofermentans (strain ATCC 700394 / DSM 18823 / ISDg) (Clostridium phytofermentans).